The chain runs to 81 residues: ATP synthase subunit c (81 aa).

2 helical membrane-spanning segments follow: residues 6 to 26 and 57 to 77; these read AAASVIAAALAVGLAAIGPGF and LAFMESLTIYGLVIALVLLFA.

Belongs to the ATPase C chain family. F-type ATPases have 2 components, F(1) - the catalytic core - and F(0) - the membrane proton channel. F(1) has five subunits: alpha(3), beta(3), gamma(1), delta(1), epsilon(1). F(0) has four main subunits: a(1), b(1), b'(1) and c(10-14). The alpha and beta chains form an alternating ring which encloses part of the gamma chain. F(1) is attached to F(0) by a central stalk formed by the gamma and epsilon chains, while a peripheral stalk is formed by the delta, b and b' chains.

It is found in the cellular thylakoid membrane. F(1)F(0) ATP synthase produces ATP from ADP in the presence of a proton or sodium gradient. F-type ATPases consist of two structural domains, F(1) containing the extramembraneous catalytic core and F(0) containing the membrane proton channel, linked together by a central stalk and a peripheral stalk. During catalysis, ATP synthesis in the catalytic domain of F(1) is coupled via a rotary mechanism of the central stalk subunits to proton translocation. Functionally, key component of the F(0) channel; it plays a direct role in translocation across the membrane. A homomeric c-ring of between 10-14 subunits forms the central stalk rotor element with the F(1) delta and epsilon subunits. The chain is ATP synthase subunit c from Rippkaea orientalis (strain PCC 8801 / RF-1) (Cyanothece sp. (strain PCC 8801)).